The following is a 364-amino-acid chain: Uroporphyrinogen decarboxylase (364 aa).

Substrate contacts are provided by residues 28-32 (RQAGR), aspartate 78, tyrosine 160, threonine 215, and histidine 333.

Belongs to the uroporphyrinogen decarboxylase family. As to quaternary structure, homodimer.

It is found in the cytoplasm. It catalyses the reaction uroporphyrinogen III + 4 H(+) = coproporphyrinogen III + 4 CO2. It functions in the pathway porphyrin-containing compound metabolism; protoporphyrin-IX biosynthesis; coproporphyrinogen-III from 5-aminolevulinate: step 4/4. Its function is as follows. Catalyzes the decarboxylation of four acetate groups of uroporphyrinogen-III to yield coproporphyrinogen-III. This is Uroporphyrinogen decarboxylase from Burkholderia cenocepacia (strain ATCC BAA-245 / DSM 16553 / LMG 16656 / NCTC 13227 / J2315 / CF5610) (Burkholderia cepacia (strain J2315)).